Here is a 199-residue protein sequence, read N- to C-terminus: Pyridoxine/pyridoxamine 5'-phosphate oxidase (199 aa).

FMN is bound by residues 44-49 (RTVLLK), 59-60 (YS), K66, and Q91. K49 serves as a coordination point for substrate. Y109, R113, and S117 together coordinate substrate. Residues 126-127 (QS) and W171 contribute to the FMN site. Residue 177-179 (RLH) coordinates substrate. R181 provides a ligand contact to FMN.

The protein belongs to the pyridoxamine 5'-phosphate oxidase family. Homodimer. The cofactor is FMN.

The catalysed reaction is pyridoxamine 5'-phosphate + O2 + H2O = pyridoxal 5'-phosphate + H2O2 + NH4(+). It catalyses the reaction pyridoxine 5'-phosphate + O2 = pyridoxal 5'-phosphate + H2O2. It functions in the pathway cofactor metabolism; pyridoxal 5'-phosphate salvage; pyridoxal 5'-phosphate from pyridoxamine 5'-phosphate: step 1/1. It participates in cofactor metabolism; pyridoxal 5'-phosphate salvage; pyridoxal 5'-phosphate from pyridoxine 5'-phosphate: step 1/1. In terms of biological role, catalyzes the oxidation of either pyridoxine 5'-phosphate (PNP) or pyridoxamine 5'-phosphate (PMP) into pyridoxal 5'-phosphate (PLP). The polypeptide is Pyridoxine/pyridoxamine 5'-phosphate oxidase (Xanthomonas oryzae pv. oryzae (strain KACC10331 / KXO85)).